Consider the following 341-residue polypeptide: Phospholipid phosphatase homolog 1.2 homolog (341 aa).

3 helical membrane passes run 30 to 50 (LFIF…LLGV), 71 to 91 (ITAV…VLFV), and 122 to 142 (LLTY…LNIV). An N-linked (GlcNAc...) asparagine glycan is attached at N162. 2 helical membrane-spanning segments follow: residues 223–243 (RIVV…ISFS) and 257–277 (VGIF…TDLF). Disordered stretches follow at residues 284–308 (SETQ…ERHR) and 322–341 (FEAT…PQSA). Residues 299–308 (RNSEDEERHR) are compositionally biased toward basic and acidic residues.

This sequence belongs to the PA-phosphatase related phosphoesterase family.

It is found in the membrane. This chain is Phospholipid phosphatase homolog 1.2 homolog, found in Caenorhabditis elegans.